The following is a 694-amino-acid chain: GRB2-associated-binding protein 1 (694 aa).

The residue at position 2 (Ser-2) is an N-acetylserine. Positions 5–116 constitute a PH domain; sequence EVVCSGWLRK…WVRCICDICG (112 aa). 2 disordered regions span residues 122-164 and 194-231; these read EDPV…PYQL and PEPT…SKHG. Polar residues predominate over residues 145–157; that stretch reads APPSTQADSSSAT. Residues 194-203 show a composition bias toward basic and acidic residues; the sequence is PEPTRTHADS. Polar residues predominate over residues 204–231; the sequence is AKSTSSETDCNDNVPSHKNPASSQSKHG. Residues Ser-251, Ser-253, Ser-266, and Ser-304 each carry the phosphoserine modification. The segment at 323-386 is disordered; sequence FPEGTLGQTS…TAGMSPSRSN (64 aa). Positions 362 to 386 are enriched in polar residues; it reads IPRTASDTDSSYCIPTAGMSPSRSN. A Phosphothreonine modification is found at Thr-387. A phosphoserine mark is found at Ser-402 and Ser-454. Disordered regions lie at residues 493–532 and 544–656; these read AHMG…VKPA and ELQA…ADER. Ala-547 is modified (phosphoserine). The span at 594–611 shows a compositional bias: polar residues; it reads PNLSSEDPNLFGSNSLDG. Tyr-627 carries the post-translational modification Phosphotyrosine. A Phosphothreonine modification is found at Thr-638. Ser-651 carries the phosphoserine modification. Position 659 is a phosphotyrosine (Tyr-659). The tract at residues 671 to 694 is disordered; sequence KSTREAWTDGRQSTESETPAKSVK. A compositionally biased stretch (basic and acidic residues) spans 672-684; the sequence is STREAWTDGRQST. At Ser-683 the chain carries Phosphoserine. The segment covering 685–694 has biased composition (polar residues); that stretch reads ESETPAKSVK.

The protein belongs to the GAB family. Identified in a complex containing FRS2, GRB2, GAB1, PIK3R1 and SOS1. Forms a tripartite complex containing GAB1, METTL13 and SPRY2. Within the complex interacts with METTL13. Interacts with GRB2 and with other SH2-containing proteins. Interacts with phosphorylated LAT2. Interacts with PTPRJ. Interacts (phosphorylated) with PTPN11. Interacts with HCK. Phosphorylated in response to FGFR1 activation. Phosphorylated on tyrosine residue(s) by the epidermal growth factor receptor (EGFR) and the insulin receptor (INSR). Tyrosine phosphorylation of GAB1 mediates interaction with several proteins that contain SH2 domains. Phosphorylated on tyrosine residues by HCK upon IL6 signaling.

Adapter protein that plays a role in intracellular signaling cascades triggered by activated receptor-type kinases. Plays a role in FGFR1 signaling. Probably involved in signaling by the epidermal growth factor receptor (EGFR) and the insulin receptor (INSR). Involved in the MET/HGF-signaling pathway. The sequence is that of GRB2-associated-binding protein 1 (GAB1) from Homo sapiens (Human).